We begin with the raw amino-acid sequence, 643 residues long: Carboxy-terminal kinesin 2 (643 aa).

Disordered stretches follow at residues 1-42 (MDST…SSLE) and 81-101 (MRPKNSGPGITSTSFSGKTKV). The tract at residues 1-116 (MDSTDKKVQV…QPAAIGAEKK (116 aa)) is globular. Polar residues predominate over residues 88–101 (PGITSTSFSGKTKV). Positions 117 to 296 (KRAAWDLKGQ…LVQELKGNIR (180 aa)) form a coiled coil. Positions 294–633 (NIRVFCRVRP…LRFASKVNEC (340 aa)) constitute a Kinesin motor domain. 386–393 (GQTGSGKT) lines the ATP pocket.

This sequence belongs to the TRAFAC class myosin-kinesin ATPase superfamily. Kinesin family. NCD subfamily.

The protein localises to the cytoplasm. The protein resides in the cytoskeleton. Promotes mitotic spindle assembly. This Xenopus laevis (African clawed frog) protein is Carboxy-terminal kinesin 2.